Here is a 192-residue protein sequence, read N- to C-terminus: MVRAGAVGTHLPASGLDIFGDLRKMNKRQLYYQVLNFAMIVSSALMIWKGLIVLTGSESPIVVVLSGSMEPAFHRGDLLFLTNFREDPIRAGEIVVFKVEGRDIPIVHRVIKVHEKDNGDIKFLTKGDNNEVDDRGLYKEGQNWLEKKDVVGRARGFLPYVGMVTIIMNDYPKFKYALLAVMGAYVLLKRES.

The Cytoplasmic segment spans residues 2–28; sequence VRAGAVGTHLPASGLDIFGDLRKMNKR. A helical; Signal-anchor for type II membrane protein membrane pass occupies residues 29-48; it reads QLYYQVLNFAMIVSSALMIW. Residues 49–192 lie on the Lumenal side of the membrane; the sequence is KGLIVLTGSE…GAYVLLKRES (144 aa). Residues serine 68, histidine 108, and aspartate 134 each act as charge relay system in the active site. The interval 177–188 is C-terminal short (CTS) helix; sequence ALLAVMGAYVLL.

The protein belongs to the peptidase S26B family. Component of the signal peptidase complex paralog C (SPC-C) composed of a catalytic subunit SEC11C and three accessory subunits SPCS1, SPCS2 and SPCS3. Within the complex, interacts with SPCS2 and SPCS3. The complex induces a local thinning of the ER membrane which is used to measure the length of the signal peptide (SP) h-region of protein substrates. This ensures the selectivity of the complex towards h-regions shorter than 18-20 amino acids. Post-translationally, may undergo processing at the N-terminus.

The protein localises to the endoplasmic reticulum membrane. The enzyme catalyses Cleavage of hydrophobic, N-terminal signal or leader sequences from secreted and periplasmic proteins.. Functionally, catalytic component of the signal peptidase complex (SPC) which catalyzes the cleavage of N-terminal signal sequences from nascent proteins as they are translocated into the lumen of the endoplasmic reticulum. Specifically cleaves N-terminal signal peptides that contain a hydrophobic alpha-helix (h-region) shorter than 18-20 amino acids. The sequence is that of Signal peptidase complex catalytic subunit SEC11C (SEC11C) from Canis lupus familiaris (Dog).